The primary structure comprises 296 residues: Diaminopimelate epimerase (296 aa).

Asparagine 17, glutamine 49, and asparagine 69 together coordinate substrate. Cysteine 78 (proton donor) is an active-site residue. Substrate is bound by residues glycine 79–asparagine 80, asparagine 171, asparagine 205, and glutamate 223–arginine 224. Cysteine 232 serves as the catalytic Proton acceptor. Glycine 233–threonine 234 serves as a coordination point for substrate.

Belongs to the diaminopimelate epimerase family. Homodimer.

It localises to the cytoplasm. The catalysed reaction is (2S,6S)-2,6-diaminopimelate = meso-2,6-diaminopimelate. It participates in amino-acid biosynthesis; L-lysine biosynthesis via DAP pathway; DL-2,6-diaminopimelate from LL-2,6-diaminopimelate: step 1/1. Catalyzes the stereoinversion of LL-2,6-diaminopimelate (L,L-DAP) to meso-diaminopimelate (meso-DAP), a precursor of L-lysine and an essential component of the bacterial peptidoglycan. The sequence is that of Diaminopimelate epimerase from Methylorubrum populi (strain ATCC BAA-705 / NCIMB 13946 / BJ001) (Methylobacterium populi).